A 368-amino-acid chain; its full sequence is Agmatine deiminase (368 aa).

Cys-357 serves as the catalytic Amidino-cysteine intermediate.

It belongs to the agmatine deiminase family. As to quaternary structure, homodimer.

It carries out the reaction agmatine + H2O = N-carbamoylputrescine + NH4(+). It participates in amine and polyamine biosynthesis; putrescine biosynthesis via agmatine pathway; N-carbamoylputrescine from agmatine: step 1/1. In terms of biological role, mediates the hydrolysis of agmatine into N-carbamoylputrescine in the arginine decarboxylase (ADC) pathway of putrescine biosynthesis, a basic polyamine. The chain is Agmatine deiminase from Pseudomonas syringae pv. syringae (strain B728a).